Consider the following 243-residue polypeptide: tRNA (guanine-N(1)-)-methyltransferase (243 aa).

Residues glycine 108 and 127 to 132 contribute to the S-adenosyl-L-methionine site; that span reads LGDFVL.

The protein belongs to the RNA methyltransferase TrmD family. In terms of assembly, homodimer.

It localises to the cytoplasm. It catalyses the reaction guanosine(37) in tRNA + S-adenosyl-L-methionine = N(1)-methylguanosine(37) in tRNA + S-adenosyl-L-homocysteine + H(+). Specifically methylates guanosine-37 in various tRNAs. In Streptococcus pyogenes serotype M2 (strain MGAS10270), this protein is tRNA (guanine-N(1)-)-methyltransferase.